The sequence spans 285 residues: Hydroxyacylglutathione hydrolase, mitochondrial (285 aa).

Residues 1 to 10 (MKFLLQQIRN) constitute a mitochondrion transit peptide. H69, H71, D73, H74, H131, D154, and H198 together coordinate Zn(2+).

Zn(2+) is required as a cofactor.

Its subcellular location is the mitochondrion matrix. It catalyses the reaction an S-(2-hydroxyacyl)glutathione + H2O = a 2-hydroxy carboxylate + glutathione + H(+). The catalysed reaction is (R)-S-lactoylglutathione + H2O = (R)-lactate + glutathione + H(+). It participates in secondary metabolite metabolism; methylglyoxal degradation; (R)-lactate from methylglyoxal: step 2/2. Its activity is regulated as follows. Inhibited by various thiol compounds such as glutathione and coenzyme A. Its function is as follows. Thiolesterase that catalyzes the hydrolysis of S-D-lactoylglutathione to form glutathione and D-lactic acid. Involved in the metabolism of methylglyoxal, a toxic compound for yeast proliferation, by converting methylglyoxal to lactate via S-D-lactoylglutathione by sequential enzyme reactions catalyzed by glyoxalase I and glyoxalase II. This Saccharomyces cerevisiae (strain ATCC 204508 / S288c) (Baker's yeast) protein is Hydroxyacylglutathione hydrolase, mitochondrial.